The following is a 66-amino-acid chain: Beta-toxin Cb1 (66 aa).

The region spanning 1–66 (KEGYIVNHST…VWPLPKKTCN (66 aa)) is the LCN-type CS-alpha/beta domain. Disulfide bonds link cysteine 12-cysteine 65, cysteine 16-cysteine 41, cysteine 25-cysteine 46, and cysteine 29-cysteine 48.

It belongs to the long (4 C-C) scorpion toxin superfamily. Sodium channel inhibitor family. Beta subfamily. As to expression, expressed by the venom gland.

Its subcellular location is the secreted. Its activity is regulated as follows. Inhibited by human antibodies scFvs 10FG2 and LR. Functionally, beta toxins bind voltage-independently at site-4 of sodium channels (Nav) and reduces peak current and shifts the voltage of activation toward more negative potentials thereby affecting sodium channel activation and promoting spontaneous and repetitive firing. Has an inhibitory effect on voltage-gated sodium channel hNav1.6/SCN8A, affecting both the activation and inactivation processes. This toxin is active against mammals and lethal to mice. This chain is Beta-toxin Cb1, found in Centruroides baergi (Scorpion).